The sequence spans 1021 residues: Sodium/potassium-transporting ATPase subunit alpha-1 (1021 aa).

Positions 1-5 (MGKGV) are excised as a propeptide. Residues 1–11 (MGKGVGRDKYE) show a composition bias toward basic and acidic residues. A disordered region spans residues 1 to 36 (MGKGVGRDKYEPAAVSEHGDKKKAKKERDMDELKKE). Residues 6-85 (GRDKYEPAAV…NALTPPPTTP (80 aa)) are Cytoplasmic-facing. Lys-9 carries the post-translational modification N6-acetyllysine. Position 10 is a phosphotyrosine (Tyr-10). A Phosphoserine; by PKC modification is found at Ser-16. Lys-21 is modified (N6-acetyllysine). Positions 26–36 (KERDMDELKKE) are enriched in basic and acidic residues. Phosphoserine is present on residues Ser-38 and Ser-45. The tract at residues 80 to 82 (PPP) is phosphoinositide-3 kinase binding. A helical membrane pass occupies residues 86 to 106 (EWVKFCRQLFGGFSMLLWIGA). Over 107–129 (VLCFLAYGIQAATEEEPQNDNLY) the chain is Extracellular. Residues 130–150 (LGVVLSAVVIITGCFSYYQEA) form a helical membrane-spanning segment. Topologically, residues 151–286 (KSSKIMESFK…GGQTPIAAEI (136 aa)) are cytoplasmic. Residue Ser-226 is modified to Phosphoserine. Tyr-258 is subject to Phosphotyrosine. Residues 287 to 306 (EHFIHIITGVAVFLGVSFFI) form a helical membrane-spanning segment. Over 307-318 (LSLILEYTWLEA) the chain is Extracellular. A helical transmembrane segment spans residues 319 to 336 (VIFLIGIIVANVPEGLLA). Over 337–770 (TVTVCLTLTA…EEGRLIFDNL (434 aa)) the chain is Cytoplasmic. The active-site 4-aspartylphosphate intermediate is Asp-374. Phosphoserine is present on residues Ser-450 and Ser-482. Lys-485 serves as a coordination point for ATP. Residue Tyr-540 is modified to Phosphotyrosine. The tract at residues 594-715 (RAAVPDAVGK…QGAIVAVTGD (122 aa)) is mediates interaction with SCN7A. Ser-666 carries the post-translational modification Phosphoserine. Mg(2+) is bound by residues Asp-715 and Asp-719. Residues 771-790 (KKSIAYTLTSNIPEITPFLI) traverse the membrane as a helical segment. The Extracellular segment spans residues 791-800 (FIIANIPLPL). A helical transmembrane segment spans residues 801–821 (GTVTILCIDLGTDMVPAISLA). The Cytoplasmic segment spans residues 822–841 (YEQAESDIMKRQPRNPQTDK). A helical membrane pass occupies residues 842–864 (LVNERLISMAYGQIGMIQALGGF). The Extracellular segment spans residues 865-916 (FTYFVIMAENGFLPNHLLGIRVTWDDRWINDVEDSYGQQWTYEQRKIVEFTC). The chain crosses the membrane as a helical span at residues 917-936 (HTAFFVSIVVVQWADLVICK). Topologically, residues 937–949 (TRRNSVFQQGMKN) are cytoplasmic. Ser-941 bears the Phosphoserine; by PKA mark. Residues 950-968 (KILIFGLFEETALAAFLSY) form a helical membrane-spanning segment. The Extracellular portion of the chain corresponds to 969–983 (CPGMGVALRMYPLKP). A helical membrane pass occupies residues 984–1004 (TWWFCAFPYSLLIFVYDEVRK). The Cytoplasmic portion of the chain corresponds to 1005–1021 (LIIRRRPGGWVEKETYY).

The protein belongs to the cation transport ATPase (P-type) (TC 3.A.3) family. Type IIC subfamily. The sodium/potassium-transporting ATPase is composed of a catalytic alpha subunit, an auxiliary non-catalytic beta subunit and an additional regulatory subunit. Interacts with regulatory subunit FXYD1. Interacts with regulatory subunit FXYD3. Interacts with SIK1. Interacts with SLC35G1 and STIM1. Interacts with CLN3; this interaction regulates the sodium/potassium-transporting ATPase complex localization at the plasma membrane. Interacts with SCN7A; activates ATP1A1 P-type sodium:potassium-exchanging transporter activity which indirectly signals to nearby neurons to regulate sodium homeostasis. Post-translationally, phosphorylation on Tyr-10 modulates pumping activity. Phosphorylation of Ser-941 by PKA modulates the response of ATP1A1 to PKC. Dephosphorylation by protein phosphatase 2A (PP2A) following increases in intracellular sodium, leading to increase catalytic activity.

Its subcellular location is the cell membrane. The protein localises to the basolateral cell membrane. It localises to the sarcolemma. It is found in the cell projection. The protein resides in the axon. Its subcellular location is the melanosome. The catalysed reaction is K(+)(out) + Na(+)(in) + ATP + H2O = K(+)(in) + Na(+)(out) + ADP + phosphate + H(+). In terms of biological role, this is the catalytic component of the active enzyme, which catalyzes the hydrolysis of ATP coupled with the exchange of sodium and potassium ions across the plasma membrane. This action creates the electrochemical gradient of sodium and potassium ions, providing the energy for active transport of various nutrients. Could also be part of an osmosensory signaling pathway that senses body-fluid sodium levels and controls salt intake behavior as well as voluntary water intake to regulate sodium homeostasis. The chain is Sodium/potassium-transporting ATPase subunit alpha-1 (ATP1A1) from Bos taurus (Bovine).